Consider the following 122-residue polypeptide: Double-headed protease inhibitor, submandibular gland (122 aa).

Kazal-like domains are found at residues 10 to 70 (GGRK…NCDI) and 71 to 121 (ECTQ…QCES). Cystine bridges form between Cys16–Cys50, Cys28–Cys47, Cys36–Cys68, Cys72–Cys101, Cys79–Cys98, and Cys87–Cys119.

The protein resides in the secreted. Functionally, this inhibitor is composed of two homologous actively inhibiting halves: one which inhibits trypsin, the other which inhibits elastase. The protein is Double-headed protease inhibitor, submandibular gland of Meles meles (Eurasian badger).